The chain runs to 280 residues: H-2 class II histocompatibility antigen gamma chain (280 aa).

The Cytoplasmic portion of the chain corresponds to 1 to 30 (MDDQRDLISNHEQLPILGQRARAPESNCNR). Ser9 is subject to Phosphoserine. Residues 31–56 (GVLYTSVSVLVALLLAGQATTAYFLY) form a helical; Signal-anchor for type II membrane protein membrane-spanning segment. Residues 57 to 280 (QQQGRLDKLT…TKQDMGQMFL (224 aa)) lie on the Extracellular side of the membrane. N-linked (GlcNAc...) asparagine glycans are attached at residues Asn114 and Asn120. Positions 194-255 (LTKCQEEVSH…HTKSRGRHNC (62 aa)) constitute a Thyroglobulin type-1 domain. 3 disulfide bridges follow: Cys197/Cys216, Cys227/Cys234, and Cys236/Cys255. The segment at 246-268 (HTKSRGRHNCSEPLDMEDPSSGL) is disordered. Ser266 carries an O-linked (Xyl...) (chondroitin sulfate) serine glycan.

As to quaternary structure, nonamer composed of three alpha/beta/gamma heterotrimers. Interacts with CD44; this complex is essential for the MIF-induced signaling cascade that results in B cell survival. In terms of assembly, interacts with the mature form of CTSL; the complex survive in neutral pH environment.

The protein resides in the late endosome. It is found in the lysosome. It localises to the cell membrane. The protein localises to the endoplasmic reticulum membrane. Its subcellular location is the golgi apparatus. The protein resides in the trans-Golgi network. It is found in the endosome. It localises to the secreted. Plays a critical role in MHC class II antigen processing by stabilizing peptide-free class II alpha/beta heterodimers in a complex soon after their synthesis and directing transport of the complex from the endoplasmic reticulum to compartments where peptide loading of class II takes place. Enhance also the stimulation of T-cell responses through interaction with CD44. Its function is as follows. Binds to the peptide-binding site of MHC class II alpha/beta heterodimers forming an alpha-beta-CLIP complex, thereby preventing the loading of antigenic peptides to the MHC class II complex until its release by HLA-DM in the endosome. In terms of biological role, stabilizes the conformation of mature CTSL by binding to its active site and serving as a chaperone to help maintain a pool of mature enzyme in endocytic compartments and extracellular space of antigen-presenting cells (APCs). This is H-2 class II histocompatibility antigen gamma chain from Rattus norvegicus (Rat).